A 443-amino-acid chain; its full sequence is Oxygen-dependent coproporphyrinogen-III oxidase, mitochondrial (443 aa).

Residues Met1–Arg98 constitute a mitochondrion transit peptide. Positions Met90 to Glu111 are disordered. Ser101 bears the Phosphoserine mark. The tract at residues Val182–Lys191 is important for dimerization. Position 233 (Ser233) interacts with coproporphyrinogen III. Residue His247 is the Proton donor of the active site. Asn249–Arg251 lines the coproporphyrinogen III pocket. Residues Tyr381–Glu417 form an important for dimerization region. Lys393 is subject to N6-acetyllysine; alternate. Lys393 is subject to N6-succinyllysine; alternate. A coproporphyrinogen III-binding site is contributed by Gly400–Arg402.

Belongs to the aerobic coproporphyrinogen-III oxidase family. In terms of assembly, homodimer.

Its subcellular location is the mitochondrion intermembrane space. The catalysed reaction is coproporphyrinogen III + O2 + 2 H(+) = protoporphyrinogen IX + 2 CO2 + 2 H2O. The protein operates within porphyrin-containing compound metabolism; protoporphyrin-IX biosynthesis; protoporphyrinogen-IX from coproporphyrinogen-III (O2 route): step 1/1. In terms of biological role, involved in the heme biosynthesis. Catalyzes the aerobic oxidative decarboxylation of propionate groups of rings A and B of coproporphyrinogen-III to yield the vinyl groups in protoporphyrinogen-IX. The protein is Oxygen-dependent coproporphyrinogen-III oxidase, mitochondrial of Rattus norvegicus (Rat).